A 725-amino-acid chain; its full sequence is ABC transporter G family member 7 (725 aa).

Residues Val-12–Val-34 traverse the membrane as a helical segment. The ABC transporter domain occupies Ile-70–Pro-316. Residue Gly-108–Thr-115 participates in ATP binding. The region spanning Arg-392 to Phe-603 is the ABC transmembrane type-2 domain. 4 consecutive transmembrane segments (helical) span residues Leu-446–Phe-466, Ile-493–Met-513, Gly-528–Val-548, and Ala-553–Val-573. Positions Asn-676–Leu-725 are disordered. Basic and acidic residues predominate over residues Asp-682–Lys-691.

This sequence belongs to the ABC transporter superfamily. ABCG family. Eye pigment precursor importer (TC 3.A.1.204) subfamily.

It is found in the membrane. The protein is ABC transporter G family member 7 (ABCG7) of Arabidopsis thaliana (Mouse-ear cress).